Reading from the N-terminus, the 210-residue chain is Guanylate kinase (210 aa).

Residues 6 to 186 (GVILVLSSPS…TADRISNILR (181 aa)) form the Guanylate kinase-like domain. 13–20 (SPSGCGKT) is an ATP binding site.

This sequence belongs to the guanylate kinase family.

It is found in the cytoplasm. It carries out the reaction GMP + ATP = GDP + ADP. Essential for recycling GMP and indirectly, cGMP. The polypeptide is Guanylate kinase (Anaplasma phagocytophilum (strain HZ)).